A 138-amino-acid chain; its full sequence is MSGTFLGFDFGTKSIGVAVGQRITATARPLPALKAQDGKPDWNVIEKLLKEWQPEAVIVGLPLNMDGTEQPLTARARNFANKIHGRFGVAILLHDERLSTVEARAGLFEHGGYRALNKGSVDSASAVVILESYFEQSF.

This sequence belongs to the YqgF nuclease family.

The protein localises to the cytoplasm. In terms of biological role, could be a nuclease involved in processing of the 5'-end of pre-16S rRNA. The sequence is that of Putative pre-16S rRNA nuclease from Klebsiella pneumoniae subsp. pneumoniae (strain ATCC 700721 / MGH 78578).